The primary structure comprises 768 residues: 5-methyltetrahydropteroyltriglutamate--homocysteine methyltransferase (768 aa).

5-methyltetrahydropteroyltri-L-glutamate-binding positions include 17–20 (RELK) and lysine 117. Residues 442 to 444 (IGS) and glutamate 495 contribute to the L-homocysteine site. Residues 442–444 (IGS) and glutamate 495 contribute to the L-methionine site. 5-methyltetrahydropteroyltri-L-glutamate-binding positions include 526 to 527 (RC) and tryptophan 572. Aspartate 610 lines the L-homocysteine pocket. L-methionine is bound at residue aspartate 610. Glutamate 616 is a binding site for 5-methyltetrahydropteroyltri-L-glutamate. Residues histidine 653, cysteine 655, and glutamate 677 each contribute to the Zn(2+) site. Histidine 706 acts as the Proton donor in catalysis. Residue cysteine 738 participates in Zn(2+) binding.

The protein belongs to the vitamin-B12 independent methionine synthase family. Zn(2+) serves as cofactor.

It carries out the reaction 5-methyltetrahydropteroyltri-L-glutamate + L-homocysteine = tetrahydropteroyltri-L-glutamate + L-methionine. The protein operates within amino-acid biosynthesis; L-methionine biosynthesis via de novo pathway; L-methionine from L-homocysteine (MetE route): step 1/1. Functionally, catalyzes the transfer of a methyl group from 5-methyltetrahydrofolate to homocysteine resulting in methionine formation. The polypeptide is 5-methyltetrahydropteroyltriglutamate--homocysteine methyltransferase (Bifidobacterium adolescentis (strain ATCC 15703 / DSM 20083 / NCTC 11814 / E194a)).